We begin with the raw amino-acid sequence, 730 residues long: MSPPNCLLAVLALTVFIGANNALPITSRPIEGNVQRMVWEDWVNLDPEQRNLTKEKKITAKSIFTLPFRHCPQGHTLFNQLCIPQSNIDPTDLVKQELILAGGSNGSPPPPPIGDYDYGDDEESEEIVYDLSVIPTAMQDGLPPSVGTGDQALPSEDAPLKFNIFEKKFPTGTGEHEEMPLPPDMAAATYAKNISTTPETSTSITPTSTTTFAVPSVPSGEASNRIPGGVDLLAAPSDAFSTSTTLSMPTSNTTTTSNKDIGQVESIVLPADQEHDGLVHLVTSSLSDNDSDDSSTTLNGFNAEADLAQLLKVDAFWPVYDGSIELLPPLFSHRKVAPPLSADQDVKTKHAVDAAEKVGAELEEEVGEEEVTATDILPSEEDEYTTETATTTGDTTVAEASMDTSTATSTSGQSSPHPPEEPEIDERENRLVLIKSKVQPVQLTTTTSATATTAADVANSSSSTDRFHYQHFVEDESSTTTATPEPSSSTPGDPIEQSDMPASDNDNLMTNTIGGRGDDDDDGGHKATSEIHVQQELRLINELVKGKQRQQHQPQKQQLEPTSTEITSALTSTSTEDATTTTTTTTAYTNWSKVMPQLGQSTSETAATTETVATSGQVNEISLTATSASTEVKHFSITNRSYRNSKIIREDRLTVEPEGIVESAASTESAGTAATTPNSSSNPDGYTPLWWLPSIGWRLDRHLDGNGEDQSLLLRFFSTFRGSNTAATTR.

The signal sequence occupies residues 1–21; sequence MSPPNCLLAVLALTVFIGANN. Residues N51 and N193 are each glycosylated (N-linked (GlcNAc...) asparagine). The segment covering 197-211 has biased composition (low complexity); the sequence is TPETSTSITPTSTTT. The disordered stretch occupies residues 197–222; sequence TPETSTSITPTSTTTFAVPSVPSGEA. N-linked (GlcNAc...) asparagine glycosylation is found at N252 and N289. Residues 361–385 are compositionally biased toward acidic residues; it reads ELEEEVGEEEVTATDILPSEEDEYT. A disordered region spans residues 361–424; that stretch reads ELEEEVGEEE…SPHPPEEPEI (64 aa). Low complexity predominate over residues 386 to 415; the sequence is TETATTTGDTTVAEASMDTSTATSTSGQSS. N459 carries an N-linked (GlcNAc...) asparagine glycan. Disordered stretches follow at residues 474–526 and 545–583; these read EDES…GGHK and KGKQ…TTTT. Positions 478 to 491 are enriched in low complexity; sequence STTTATPEPSSSTP. Positions 504–513 are enriched in polar residues; that stretch reads DNDNLMTNTI. A compositionally biased stretch (low complexity) spans 567–583; the sequence is TSALTSTSTEDATTTTT. 2 N-linked (GlcNAc...) asparagine glycosylation sites follow: N590 and N639. Over residues 663-676 the composition is skewed to low complexity; the sequence is SAASTESAGTAATT. The segment at 663–683 is disordered; the sequence is SAASTESAGTAATTPNSSSNP. N-linked (GlcNAc...) asparagine glycosylation occurs at N678.

May be highly O-glycosylated in its Ser/Thr-rich C-terminal part. In terms of tissue distribution, expressed in the invagination primordia in a pattern that precisely precedes the pattern of constrictions.

It localises to the secreted. It is found in the extracellular space. Its subcellular location is the extracellular matrix. Coordinates cell shape changes during formation of the ventral furrow and invagination of the posterior midgut primordium, by inducing apical constriction of cells in spatially and temporally defined manners. Could function as a secreted signal to initiate apical constriction by acting as a ligand for an unidentified G protein-coupled receptor, which in turn activates the G protein alpha subunit encoded by concertina, in neighboring cells. Such an intracellular pathway would ultimately induce contraction of the apical actin-myosin network. In the ventral furrow, fog appears to ensure that all the cells initiate constriction within several minutes of each other. In the posterior midgut invagination, fog appears to direct the ordered progression of constriction initiations out from a central region and also to delimit the peripheral extent of this spreading. This Drosophila melanogaster (Fruit fly) protein is Protein folded gastrulation (fog).